The primary structure comprises 41 residues: Large ribosomal subunit protein bL36 (41 aa).

The protein belongs to the bacterial ribosomal protein bL36 family.

The polypeptide is Large ribosomal subunit protein bL36 (Rhodopseudomonas palustris (strain HaA2)).